We begin with the raw amino-acid sequence, 204 residues long: dITP/XTP pyrophosphatase (204 aa).

Position 8 to 13 (8 to 13 (TKNAGK)) interacts with substrate. Asp-70 acts as the Proton acceptor in catalysis. Asp-70 contributes to the Mg(2+) binding site. Substrate-binding positions include Ser-71, 153–156 (FGYD), Lys-176, and 181–182 (HR).

The protein belongs to the HAM1 NTPase family. Homodimer. Mg(2+) is required as a cofactor.

It catalyses the reaction XTP + H2O = XMP + diphosphate + H(+). The enzyme catalyses dITP + H2O = dIMP + diphosphate + H(+). The catalysed reaction is ITP + H2O = IMP + diphosphate + H(+). In terms of biological role, pyrophosphatase that catalyzes the hydrolysis of nucleoside triphosphates to their monophosphate derivatives, with a high preference for the non-canonical purine nucleotides XTP (xanthosine triphosphate), dITP (deoxyinosine triphosphate) and ITP. Seems to function as a house-cleaning enzyme that removes non-canonical purine nucleotides from the nucleotide pool, thus preventing their incorporation into DNA/RNA and avoiding chromosomal lesions. The protein is dITP/XTP pyrophosphatase of Geobacillus kaustophilus (strain HTA426).